We begin with the raw amino-acid sequence, 242 residues long: Hairy and enhancer of split-related protein HELT (242 aa).

The 56-residue stretch at R10–L65 folds into the bHLH domain. The residue at position 48 (K48) is an N6-acetyllysine. Positions F87–L122 constitute an Orange domain.

The protein belongs to the HEY family. As to quaternary structure, self-associates. Interacts with HES5 and HEY2.

Its subcellular location is the nucleus. Functionally, transcriptional repressor which binds preferentially to the canonical E box sequence 5'-CACGCG-3'. This chain is Hairy and enhancer of split-related protein HELT (HELT), found in Homo sapiens (Human).